The primary structure comprises 213 residues: MADTAHQCTIVGIAGASASGKSLIASTLYRELRAQVGDHNIGVIPEDCYYRDQSDLTMEERYKVNYDHPNSMDHALLYQHLCELKAGNAIELPQYDYVAHTRKSETIHFKPKKVIIIEGILLLTDKRLREEMDFSIFVDTPLDICLMRRIKRDVNERGRSLDSVIEQYNKTVRPMFFQFIEPSKQYADIIVPRGGKNRVAIDILKAKIGQFCE.

Position 15 to 22 (15 to 22 (GASASGKS)) interacts with ATP.

This sequence belongs to the uridine kinase family.

Its subcellular location is the cytoplasm. The enzyme catalyses uridine + ATP = UMP + ADP + H(+). The catalysed reaction is cytidine + ATP = CMP + ADP + H(+). It functions in the pathway pyrimidine metabolism; CTP biosynthesis via salvage pathway; CTP from cytidine: step 1/3. Its pathway is pyrimidine metabolism; UMP biosynthesis via salvage pathway; UMP from uridine: step 1/1. The chain is Uridine kinase from Proteus mirabilis (strain HI4320).